The following is a 208-amino-acid chain: Ribonuclease HII (208 aa).

Positions 17–208 (LRVCGIDEAG…SFRLRQLGEK (192 aa)) constitute an RNase H type-2 domain. A divalent metal cation contacts are provided by Asp23, Glu24, and Asp120.

Belongs to the RNase HII family. Requires Mn(2+) as cofactor. The cofactor is Mg(2+).

Its subcellular location is the cytoplasm. It catalyses the reaction Endonucleolytic cleavage to 5'-phosphomonoester.. Functionally, endonuclease that specifically degrades the RNA of RNA-DNA hybrids. The polypeptide is Ribonuclease HII (Chlorobium luteolum (strain DSM 273 / BCRC 81028 / 2530) (Pelodictyon luteolum)).